Consider the following 432-residue polypeptide: Transcriptional adapter 3 (432 aa).

Lys21 participates in a covalent cross-link: Glycyl lysine isopeptide (Lys-Gly) (interchain with G-Cter in SUMO2). Residues Ile40–Gln69 are a coiled coil. Residues Ala87–Gln127 are disordered. Residue Lys129 forms a Glycyl lysine isopeptide (Lys-Gly) (interchain with G-Cter in SUMO2) linkage. Positions Asn272–Lys319 are disordered. A phosphoserine mark is found at Ser280 and Ser298. A compositionally biased stretch (polar residues) spans Ala295–Pro305. The stretch at Leu367–Thr407 forms a coiled coil. Lys418 is subject to N6-acetyllysine.

It belongs to the NGG1 family. The PCAF complex is composed of a number of TBP-associated factors (TAFS), such as TAF5, TAF5L, TAF6, TAF6L, TAF9, TAF10 and TAF12, PCAF, and also PCAF-associated factors (PAFs), such as TADA2L/ADA2, TADA3L/ADA3 and SPT3. Interacts directly with TADA2L and PCAF and also with the high-risk HPV oncoprotein E6. Component of the STAGA transcription coactivator-HAT complex, at least composed of SUPT3H, GCN5L2, TAF5L, TAF6L, SUPT7L, TADA3L, TAD1L, TAF10, TAF12, TRRAP and TAF9. Component of the TFTC-HAT complex. Component of the ADA2A-containing complex (ATAC), composed of KAT14, KAT2A, TADA2L, TADA3L, ZZ3, MBIP, WDR5, YEATS2, CCDC101 and DR1.

Its subcellular location is the nucleus. Functionally, functions as a component of the PCAF complex. The PCAF complex is capable of efficiently acetylating histones in a nucleosomal context. The PCAF complex could be considered as the human version of the yeast SAGA complex. Also known as a coactivator for p53/TP53-dependent transcriptional activation. Component of the ATAC complex, a complex with histone acetyltransferase activity on histones H3 and H4. This is Transcriptional adapter 3 (Tada3) from Rattus norvegicus (Rat).